We begin with the raw amino-acid sequence, 466 residues long: Hydroxyproline dehydrogenase (466 aa).

This sequence belongs to the proline oxidase family. FAD is required as a cofactor.

It catalyses the reaction trans-4-hydroxy-L-proline + a quinone = (3R,5S)-1-pyrroline-3-hydroxy-5-carboxylate + a quinol + H(+). The catalysed reaction is L-proline + a quinone = (S)-1-pyrroline-5-carboxylate + a quinol + H(+). Its pathway is amino-acid degradation; L-proline degradation into L-glutamate; L-glutamate from L-proline: step 1/2. In terms of biological role, dehydrogenase that converts trans-4-L-hydroxyproline to delta-1-pyrroline-3-hydroxy-5-carboxylate (Hyp) using a quinone as the terminal electron acceptor. Can also use proline as a substrate but with a very much lower efficiency. Does not react with other diastereomers of Hyp: trans-4-D-hydroxyproline and cis-4-L-hydroxyproline. This Xenopus laevis (African clawed frog) protein is Hydroxyproline dehydrogenase (prodh2).